A 381-amino-acid chain; its full sequence is Chaperone protein DnaJ (381 aa).

The J domain occupies 5–70; that stretch reads DFYEVLGVSR…QKKAAYDQYG (66 aa). The segment at 136–214 adopts a CR-type zinc-finger fold; sequence GVSKEIEVPT…CHGQGRKQKT (79 aa). Residues C149, C152, C166, C169, C188, C191, C202, and C205 each coordinate Zn(2+). CXXCXGXG motif repeat units follow at residues 149–156, 166–173, 188–195, and 202–209; these read CDICDGSG, CGTCHGHG, CPTCNGKG, and CNSCHGQG.

This sequence belongs to the DnaJ family. As to quaternary structure, homodimer. Zn(2+) is required as a cofactor.

Its subcellular location is the cytoplasm. Participates actively in the response to hyperosmotic and heat shock by preventing the aggregation of stress-denatured proteins and by disaggregating proteins, also in an autonomous, DnaK-independent fashion. Unfolded proteins bind initially to DnaJ; upon interaction with the DnaJ-bound protein, DnaK hydrolyzes its bound ATP, resulting in the formation of a stable complex. GrpE releases ADP from DnaK; ATP binding to DnaK triggers the release of the substrate protein, thus completing the reaction cycle. Several rounds of ATP-dependent interactions between DnaJ, DnaK and GrpE are required for fully efficient folding. Also involved, together with DnaK and GrpE, in the DNA replication of plasmids through activation of initiation proteins. This chain is Chaperone protein DnaJ, found in Vibrio atlanticus (strain LGP32) (Vibrio splendidus (strain Mel32)).